The following is a 116-amino-acid chain: Large ribosomal subunit protein bL19 (116 aa).

It belongs to the bacterial ribosomal protein bL19 family.

Functionally, this protein is located at the 30S-50S ribosomal subunit interface and may play a role in the structure and function of the aminoacyl-tRNA binding site. In Clostridium botulinum (strain Eklund 17B / Type B), this protein is Large ribosomal subunit protein bL19.